We begin with the raw amino-acid sequence, 101 residues long: Small ribosomal subunit protein bS6 (101 aa).

Belongs to the bacterial ribosomal protein bS6 family. In terms of assembly, part of the 30S ribosomal subunit. Forms a tight heterodimer with protein bS18.

Functionally, located on the outer edge of the platform on the body of the 30S subunit. This Thermus thermophilus (strain ATCC BAA-163 / DSM 7039 / HB27) protein is Small ribosomal subunit protein bS6 (rpsF).